We begin with the raw amino-acid sequence, 528 residues long: Sodium-dependent lysophosphatidylcholine symporter 1 (528 aa).

Residues methionine 1–serine 37 are Cytoplasmic-facing. Residues valine 38–leucine 66 form a helical membrane-spanning segment. At leucine 67 to aspartate 73 the chain is on the extracellular side. Residues proline 74–isoleucine 99 form a helical membrane-spanning segment. The Cytoplasmic segment spans residues serine 100 to arginine 109. Residues leucine 110–tryptophan 129 traverse the membrane as a helical segment. Residues phenylalanine 130–glutamine 138 are Extracellular-facing. A helical membrane pass occupies residues valine 139–serine 161. At alanine 162 to serine 176 the chain is on the cytoplasmic side. A helical membrane pass occupies residues alanine 177–isoleucine 199. Topologically, residues valine 200–alanine 241 are extracellular. Cysteine 207 and cysteine 460 form a disulfide bridge. Residues asparagine 218 and asparagine 227 are each glycosylated (N-linked (GlcNAc...) asparagine). Residues tyrosine 242–glycine 263 form a helical membrane-spanning segment. Over valine 264 to isoleucine 295 the chain is Cytoplasmic. A helical membrane pass occupies residues lysine 296–cysteine 319. Residues threonine 320–glutamate 328 are Extracellular-facing. Residues phenylalanine 329–leucine 351 traverse the membrane as a helical segment. Over threonine 352–glycine 355 the chain is Cytoplasmic. A helical transmembrane segment spans residues lysine 356 to valine 376. At leucine 377–leucine 381 the chain is on the extracellular side. The chain crosses the membrane as a helical span at residues valine 382–serine 404. Residues methionine 405–phenylalanine 427 lie on the Cytoplasmic side of the membrane. A helical transmembrane segment spans residues phenylalanine 428–leucine 450. Residues aspartate 451–asparagine 467 lie on the Extracellular side of the membrane. Residues isoleucine 468–lysine 490 traverse the membrane as a helical segment. The Cytoplasmic portion of the chain corresponds to leucine 491 to valine 528. Residues lysine 503 to serine 513 are compositionally biased toward basic and acidic residues. Residues lysine 503–valine 528 are disordered. Low complexity predominate over residues asparagine 514–valine 528.

It belongs to the major facilitator superfamily.

The protein localises to the cell membrane. It is found in the endoplasmic reticulum membrane. It carries out the reaction a 1-acyl-sn-glycero-3-phosphocholine(in) + Na(+)(in) = a 1-acyl-sn-glycero-3-phosphocholine(out) + Na(+)(out). It catalyses the reaction 1-(4Z,7Z,10Z,13Z,16Z,19Z-docosahexaenoyl)-sn-glycero-3-phosphocholine(in) + Na(+)(in) = 1-(4Z,7Z,10Z,13Z,16Z,19Z-docosahexaenoyl)-sn-glycero-3-phosphocholine(out) + Na(+)(out). The enzyme catalyses 1-(9Z-octadecenoyl)-sn-glycero-3-phosphocholine(in) + Na(+)(in) = 1-(9Z-octadecenoyl)-sn-glycero-3-phosphocholine(out) + Na(+)(out). The catalysed reaction is 1-hexadecanoyl-sn-glycero-3-phosphocholine(in) + Na(+)(in) = 1-hexadecanoyl-sn-glycero-3-phosphocholine(out) + Na(+)(out). It carries out the reaction a 1-acyl-sn-glycero-3-phosphoethanolamine(in) + Na(+)(in) = a 1-acyl-sn-glycero-3-phosphoethanolamine(out) + Na(+)(out). Its function is as follows. Sodium-dependent lysophosphatidylcholine (LPC) symporter, which plays an essential role for blood-brain barrier formation and function. Specifically expressed in endothelium of the blood-brain barrier of micro-vessels and transports LPC into the brain. Transport of LPC is essential because it constitutes the major mechanism by which docosahexaenoic acid (DHA), an omega-3 fatty acid that is essential for normal brain growth and cognitive function, enters the brain. Transports LPC carrying long-chain fatty acids such LPC oleate and LPC palmitate with a minimum acyl chain length of 14 carbons. Does not transport docosahexaenoic acid in unesterified fatty acid. This chain is Sodium-dependent lysophosphatidylcholine symporter 1, found in Gallus gallus (Chicken).